An 814-amino-acid polypeptide reads, in one-letter code: Threonine--tRNA ligase 2, cytoplasmic (814 aa).

Residues 2–72 (AAHIAQRLTV…SLREEQERAR (71 aa)) are a coiled coil. The disordered stretch occupies residues 62–142 (RSLREEQERA…GHKQEGPCAP (81 aa)). 3 stretches are compositionally biased toward basic and acidic residues: residues 63–72 (SLREEQERAR), 88–102 (EEPK…EKGQ), and 119–137 (GNKK…HKQE). Residues 172-234 (KPIKITLADG…EQDSNVELLK (63 aa)) enclose the TGS domain. The short motif at 798–804 (KLKTLKK) is the Nuclear localization signal element.

This sequence belongs to the class-II aminoacyl-tRNA synthetase family.

The protein localises to the cytoplasm. Its subcellular location is the nucleus. It carries out the reaction tRNA(Thr) + L-threonine + ATP = L-threonyl-tRNA(Thr) + AMP + diphosphate + H(+). In terms of biological role, catalyzes the attachment of threonine to tRNA(Thr) in a two-step reaction: threonine is first activated by ATP to form Thr-AMP and then transferred to the acceptor end of tRNA(Thr). Also edits incorrectly charged tRNA(Thr) via its editing domain, at the post-transfer stage. This Xenopus tropicalis (Western clawed frog) protein is Threonine--tRNA ligase 2, cytoplasmic (tars3).